We begin with the raw amino-acid sequence, 307 residues long: Agmatinase (307 aa).

Positions 128, 151, 153, 155, 232, and 234 each coordinate Mn(2+).

It belongs to the arginase family. Agmatinase subfamily. Requires Mn(2+) as cofactor.

It catalyses the reaction agmatine + H2O = urea + putrescine. The protein operates within amine and polyamine biosynthesis; putrescine biosynthesis via agmatine pathway; putrescine from agmatine: step 1/1. Catalyzes the formation of putrescine from agmatine. The protein is Agmatinase of Neisseria meningitidis serogroup A / serotype 4A (strain DSM 15465 / Z2491).